Reading from the N-terminus, the 206-residue chain is Large ribosomal subunit protein uL4 (206 aa).

Positions 63 to 93 (MYKQKGTGRARHHSARAPQFRGGGKAHGPVV) are disordered. Positions 64–77 (YKQKGTGRARHHSA) are enriched in basic residues.

Belongs to the universal ribosomal protein uL4 family. In terms of assembly, part of the 50S ribosomal subunit.

Its function is as follows. One of the primary rRNA binding proteins, this protein initially binds near the 5'-end of the 23S rRNA. It is important during the early stages of 50S assembly. It makes multiple contacts with different domains of the 23S rRNA in the assembled 50S subunit and ribosome. Functionally, forms part of the polypeptide exit tunnel. This Sinorhizobium medicae (strain WSM419) (Ensifer medicae) protein is Large ribosomal subunit protein uL4.